The chain runs to 66 residues: Phylloseptin-S2 (66 aa).

The first 22 residues, 1–22 (MAFLKKSLFLVLFLGLVSLSIC), serve as a signal peptide directing secretion. Positions 23 to 46 (EEEKRETEEEEHDQEEDDKSEEKR) are excised as a propeptide. Residues 25–44 (EKRETEEEEHDQEEDDKSEE) form a disordered region. Residues 30 to 41 (EEEEHDQEEDDK) are compositionally biased toward acidic residues. Phenylalanine amide is present on Phe65.

As to expression, expressed by the skin glands.

Its subcellular location is the secreted. The protein resides in the target cell membrane. Functionally, antimicrobial peptide with high activity against Gram-positive bacteria, moderate activity against Gram-negative bacteria, and moderate activity against fungi. Acts by causing bacterial membrane disruption inducing leakage of the intracellular content followed by cell death. It adopts an alpha-helical amphipathic structure in membrane environments. Also shows highly potent antiparasitic activity against Leishmania species. Shows moderate hemolytic activity on human erythrocytes (LC(50)=25 uM). Is also active on human monocytes (IC(50)=22.5 uM). This Phyllomedusa sauvagei (Sauvage's leaf frog) protein is Phylloseptin-S2.